The primary structure comprises 462 residues: Arginine biosynthesis bifunctional protein ArgJ, mitochondrial (462 aa).

Substrate is bound by residues Thr-189, Lys-215, Thr-236, Glu-327, Asn-457, and Ser-462. The active-site Nucleophile is Thr-236.

It belongs to the ArgJ family. As to quaternary structure, heterodimer of an alpha and a beta chain. In terms of processing, the alpha and beta chains are autoproteolytically processed from a single precursor protein within the mitochondrion.

It is found in the mitochondrion matrix. The enzyme catalyses N(2)-acetyl-L-ornithine + L-glutamate = N-acetyl-L-glutamate + L-ornithine. It carries out the reaction L-glutamate + acetyl-CoA = N-acetyl-L-glutamate + CoA + H(+). It participates in amino-acid biosynthesis; L-arginine biosynthesis; L-ornithine and N-acetyl-L-glutamate from L-glutamate and N(2)-acetyl-L-ornithine (cyclic): step 1/1. It functions in the pathway amino-acid biosynthesis; L-arginine biosynthesis; N(2)-acetyl-L-ornithine from L-glutamate: step 1/4. Its function is as follows. Catalyzes two activities which are involved in the cyclic version of arginine biosynthesis: the synthesis of acetylglutamate from glutamate and acetyl-CoA, and of ornithine by transacetylation between acetylornithine and glutamate. This Postia placenta (strain ATCC 44394 / Madison 698-R) (Brown rot fungus) protein is Arginine biosynthesis bifunctional protein ArgJ, mitochondrial.